Consider the following 57-residue polypeptide: Large ribosomal subunit protein bL32 (57 aa).

Positions methionine 1–lysine 37 are disordered.

It belongs to the bacterial ribosomal protein bL32 family.

This Escherichia fergusonii (strain ATCC 35469 / DSM 13698 / CCUG 18766 / IAM 14443 / JCM 21226 / LMG 7866 / NBRC 102419 / NCTC 12128 / CDC 0568-73) protein is Large ribosomal subunit protein bL32.